Reading from the N-terminus, the 358-residue chain is G-protein coupled receptor 62 (358 aa).

Topologically, residues 1–17 (MANGSGLSVTELAGSVG) are extracellular. The N-linked (GlcNAc...) asparagine glycan is linked to Asn3. The helical transmembrane segment at 18 to 38 (FILAVLVEVGAVLGNGTLLVV) threads the bilayer. Over 39 to 53 (VLRTPDLQDAFYLAH) the chain is Cytoplasmic. The helical transmembrane segment at 54–74 (LCVVDLLAAASIMPLGLLAAP) threads the bilayer. Topologically, residues 75-89 (PGLGTVPLDPSSCRA) are extracellular. Residues 90-110 (ARFLSAALLPACTLGVAALGL) traverse the membrane as a helical segment. Over 111–128 (ARYRLIVHPLRPGARPAP) the chain is Cytoplasmic. The helical transmembrane segment at 129 to 149 (ALVLTAVWSAAALLGALSLLG) threads the bilayer. Residues 150 to 176 (PPPAPPPAPARCSVLAGGLGPFRPLWA) are Extracellular-facing. Residues 177-197 (MLAFALPALLLLAAYGSIFLV) form a helical membrane-spanning segment. The Cytoplasmic portion of the chain corresponds to 198–234 (ARRAALRPPRGTRPRSDSLDSRLSFLPPLRPRLLGGK). The chain crosses the membrane as a helical span at residues 235–255 (AALAPALAVGQFAACWLPYGC). The Extracellular segment spans residues 256 to 268 (ACLAPAARAAAAE). A helical transmembrane segment spans residues 269-289 (ATVTWVAYSAFAAHPFLYGLL). The Cytoplasmic segment spans residues 290–358 (QRPVRLALGR…RQTPSVSEAT (69 aa)). Residues 334–358 (VLGPSEAPEQARELARQTPSVSEAT) are disordered.

This sequence belongs to the G-protein coupled receptor 1 family. As to quaternary structure, homodimer. Forms heterodimer with MTNR1B. Interacts with ARRB1 and ARRB2 in a spontaneous and agonist-independent manner; leading to the internalization of GPR62 in the endosomal compartment. Expressed in the brain and testes. Expressed widely, in the brain, including the cerebral cortex, cerebellum, hippocampus,thalamus and pituitary gland. In the testes, expressed specifically in the germ cells.

The protein resides in the cell membrane. Its subcellular location is the endosome membrane. Orphan G-protein coupled receptor. Constitutively activates the G(q/11)/inositol phosphate and the G(s)-alpha/cAMP signaling pathways. Has spontaneous activity for beta-arrestin recruitment. Shows a reciprocal regulatory interaction with the melatonin receptor MTNR1B most likely through receptor heteromerization. The chain is G-protein coupled receptor 62 (Gpr62) from Mus musculus (Mouse).